A 279-amino-acid chain; its full sequence is Protease HtpX homolog (279 aa).

The next 2 helical transmembrane spans lie at 6–26 (TVAL…MMGG) and 28–48 (GGAL…YWFS). His127 is a binding site for Zn(2+). Glu128 is an active-site residue. His131 contacts Zn(2+). Transmembrane regions (helical) follow at residues 137–157 (ILIG…AHMA) and 177–197 (LGLL…QMAI). Residue Glu202 coordinates Zn(2+).

It belongs to the peptidase M48B family. Zn(2+) is required as a cofactor.

The protein resides in the cell inner membrane. The sequence is that of Protease HtpX homolog from Syntrophotalea carbinolica (strain DSM 2380 / NBRC 103641 / GraBd1) (Pelobacter carbinolicus).